The primary structure comprises 239 residues: Orotidine 5'-phosphate decarboxylase (239 aa).

Residues aspartate 11, lysine 33, 60 to 69 (DLKCHDIPTT), threonine 123, arginine 185, glutamine 194, glycine 214, and arginine 215 contribute to the substrate site. Lysine 62 functions as the Proton donor in the catalytic mechanism.

This sequence belongs to the OMP decarboxylase family. Type 1 subfamily. Homodimer.

The enzyme catalyses orotidine 5'-phosphate + H(+) = UMP + CO2. The protein operates within pyrimidine metabolism; UMP biosynthesis via de novo pathway; UMP from orotate: step 2/2. Functionally, catalyzes the decarboxylation of orotidine 5'-monophosphate (OMP) to uridine 5'-monophosphate (UMP). In Bacillus licheniformis (strain ATCC 14580 / DSM 13 / JCM 2505 / CCUG 7422 / NBRC 12200 / NCIMB 9375 / NCTC 10341 / NRRL NRS-1264 / Gibson 46), this protein is Orotidine 5'-phosphate decarboxylase.